The primary structure comprises 637 residues: tRNA uridine 5-carboxymethylaminomethyl modification enzyme MnmG (637 aa).

An FAD-binding site is contributed by 14 to 19 (GAGHAG). 279–293 (GPRYCPSIEDKVVRF) is an NAD(+) binding site.

This sequence belongs to the MnmG family. As to quaternary structure, homodimer. Heterotetramer of two MnmE and two MnmG subunits. FAD is required as a cofactor.

It is found in the cytoplasm. Its function is as follows. NAD-binding protein involved in the addition of a carboxymethylaminomethyl (cmnm) group at the wobble position (U34) of certain tRNAs, forming tRNA-cmnm(5)s(2)U34. This chain is tRNA uridine 5-carboxymethylaminomethyl modification enzyme MnmG, found in Desulfitobacterium hafniense (strain Y51).